We begin with the raw amino-acid sequence, 250 residues long: Sulfate transporter CysZ (250 aa).

Transmembrane regions (helical) follow at residues 26-46 (LFVLLPLAINLVLFVGLIYLA), 71-91 (ILWPLFVVLVALMVFFTFTML), 150-170 (LFILSFIPVVNIVAAPLWLLF), and 211-231 (IVYLVLLIPVVNILMMPAAVA).

Belongs to the CysZ family.

It is found in the cell inner membrane. Functionally, high affinity, high specificity proton-dependent sulfate transporter, which mediates sulfate uptake. Provides the sulfur source for the cysteine synthesis pathway. The protein is Sulfate transporter CysZ of Pseudomonas fluorescens (strain Pf0-1).